The chain runs to 181 residues: Oleosin (181 aa).

The disordered stretch occupies residues 1-28 (TTTTYDRHFTTTQPHYRQDDRSRYDQQT). Residues 1–38 (TTTTYDRHFTTTQPHYRQDDRSRYDQQTHSQSTSRTLA) are polar. A compositionally biased stretch (basic and acidic residues) spans 16–26 (YRQDDRSRYDQ). The next 3 membrane-spanning stretches (helical) occupy residues 38–58 (AIIA…LTFI), 69–89 (PLFV…GLAV), and 90–110 (TGFL…SYLF). A hydrophobic region spans residues 39 to 110 (IIALLPVGGI…TGLSSLSYLF (72 aa)). Residues 155-181 (EMGDQGQVGVHAQVGGGKEGRKSGDRT) are disordered. Positions 158-167 (DQGQVGVHAQ) are enriched in low complexity. The span at 172 to 181 (KEGRKSGDRT) shows a compositional bias: basic and acidic residues.

The protein belongs to the oleosin family.

It localises to the lipid droplet. The protein localises to the membrane. Functionally, may have a structural role to stabilize the lipid body during desiccation of the seed by preventing coalescence of the oil. Probably interacts with both lipid and phospholipid moieties of lipid bodies. May also provide recognition signals for specific lipase anchorage in lipolysis during seedling growth. The chain is Oleosin from Helianthus annuus (Common sunflower).